The chain runs to 244 residues: Phosphoadenosine 5'-phosphosulfate reductase (244 aa).

The active-site Nucleophile; cysteine thiosulfonate intermediate is Cys-239.

This sequence belongs to the PAPS reductase family. CysH subfamily.

The protein resides in the cytoplasm. It carries out the reaction [thioredoxin]-disulfide + sulfite + adenosine 3',5'-bisphosphate + 2 H(+) = [thioredoxin]-dithiol + 3'-phosphoadenylyl sulfate. It functions in the pathway sulfur metabolism; hydrogen sulfide biosynthesis; sulfite from sulfate: step 3/3. In terms of biological role, catalyzes the formation of sulfite from phosphoadenosine 5'-phosphosulfate (PAPS) using thioredoxin as an electron donor. The polypeptide is Phosphoadenosine 5'-phosphosulfate reductase (Escherichia coli O81 (strain ED1a)).